The sequence spans 147 residues: UPF0178 protein Nther_1836 (147 aa).

The protein belongs to the UPF0178 family.

The chain is UPF0178 protein Nther_1836 from Natranaerobius thermophilus (strain ATCC BAA-1301 / DSM 18059 / JW/NM-WN-LF).